A 269-amino-acid chain; its full sequence is C-type lectin domain family 1 member A (269 aa).

Topologically, residues 1–51 are cytoplasmic; the sequence is MQAKYSSTRDMLDDDDTTISLYSGTSTVTRRAEPRHSENGTPSSVWRPVAL. The chain crosses the membrane as a helical; Signal-anchor for type II membrane protein span at residues 52–72; the sequence is TLLTLCLVLLVGLAALGLVFF. Residues 73–269 lie on the Extracellular side of the membrane; it reads QFYQLSNIQQ…AGRVVPGELQ (197 aa). N-linked (GlcNAc...) asparagine glycans are attached at residues asparagine 94, asparagine 126, asparagine 168, and asparagine 202. In terms of domain architecture, C-type lectin spans 143 to 257; it reads YGDKCYQFYK…CKELRRCACE (115 aa). 2 disulfides stabilise this stretch: cysteine 164–cysteine 256 and cysteine 235–cysteine 248.

It localises to the membrane. The chain is C-type lectin domain family 1 member A (Clec1a) from Mus musculus (Mouse).